The primary structure comprises 527 residues: Peptide chain release factor 3 (527 aa).

Positions 9-278 (NKRRTFAIIS…GLTQWAPKPQ (270 aa)) constitute a tr-type G domain. GTP-binding positions include 18-25 (SHPDAGKT), 86-90 (DTPGH), and 140-143 (NKLD).

The protein belongs to the TRAFAC class translation factor GTPase superfamily. Classic translation factor GTPase family. PrfC subfamily.

It localises to the cytoplasm. In terms of biological role, increases the formation of ribosomal termination complexes and stimulates activities of RF-1 and RF-2. It binds guanine nucleotides and has strong preference for UGA stop codons. It may interact directly with the ribosome. The stimulation of RF-1 and RF-2 is significantly reduced by GTP and GDP, but not by GMP. The chain is Peptide chain release factor 3 (prfC) from Haemophilus influenzae (strain ATCC 51907 / DSM 11121 / KW20 / Rd).